We begin with the raw amino-acid sequence, 75 residues long: Brevinin-2SN1 (75 aa).

The first 22 residues, 1 to 22, serve as a signal peptide directing secretion; it reads MFTMKKPLLFLFFLGTISLSFC. A propeptide spans 23–40 (removed in mature form); sequence EEERGADEDDEVEMTEEE. C69 and C75 are joined by a disulfide.

It belongs to the frog skin active peptide (FSAP) family. Brevinin subfamily. As to expression, expressed by the skin glands.

The protein resides in the secreted. In terms of biological role, antimicrobial peptide. Active against some Gram-negative and a variety of Gram-positive bacterial strains. Active against fungus C.glabrata 090902 but not against C.albicans ATCC 10231. Shows hemolytic activity against human erythrocytes. In Sylvirana spinulosa (Fine-spined frog), this protein is Brevinin-2SN1.